A 222-amino-acid polypeptide reads, in one-letter code: ATP synthase F(0) complex subunit a (222 aa).

The next 6 helical transmembrane spans lie at 7–27 (AFFD…AILL), 64–84 (WSLM…LGLL), 93–113 (QLTV…VLGF), 132–152 (FLIP…PITL), 160–180 (ITAG…LLSV), and 197–219 (ILEL…LYLH).

The protein belongs to the ATPase A chain family. As to quaternary structure, component of the ATP synthase complex composed at least of ATP5F1A/subunit alpha, ATP5F1B/subunit beta, ATP5MC1/subunit c (homooctomer), MT-ATP6/subunit a, MT-ATP8/subunit 8, ATP5ME/subunit e, ATP5MF/subunit f, ATP5MG/subunit g, ATP5MK/subunit k, ATP5MJ/subunit j, ATP5F1C/subunit gamma, ATP5F1D/subunit delta, ATP5F1E/subunit epsilon, ATP5PF/subunit F6, ATP5PB/subunit b, ATP5PD/subunit d, ATP5PO/subunit OSCP. ATP synthase complex consists of a soluble F(1) head domain (subunits alpha(3) and beta(3)) - the catalytic core - and a membrane F(0) domain - the membrane proton channel (subunits c, a, 8, e, f, g, k and j). These two domains are linked by a central stalk (subunits gamma, delta, and epsilon) rotating inside the F1 region and a stationary peripheral stalk (subunits F6, b, d, and OSCP). Interacts with DNAJC30; interaction is direct.

It localises to the mitochondrion inner membrane. It carries out the reaction H(+)(in) = H(+)(out). Functionally, subunit a, of the mitochondrial membrane ATP synthase complex (F(1)F(0) ATP synthase or Complex V) that produces ATP from ADP in the presence of a proton gradient across the membrane which is generated by electron transport complexes of the respiratory chain. ATP synthase complex consist of a soluble F(1) head domain - the catalytic core - and a membrane F(1) domain - the membrane proton channel. These two domains are linked by a central stalk rotating inside the F(1) region and a stationary peripheral stalk. During catalysis, ATP synthesis in the catalytic domain of F(1) is coupled via a rotary mechanism of the central stalk subunits to proton translocation. With the subunit c (ATP5MC1), forms the proton-conducting channel in the F(0) domain, that contains two crucial half-channels (inlet and outlet) that facilitate proton movement from the mitochondrial intermembrane space (IMS) into the matrix. Protons are taken up via the inlet half-channel and released through the outlet half-channel, following a Grotthuss mechanism. This chain is ATP synthase F(0) complex subunit a, found in Elephas maximus (Indian elephant).